We begin with the raw amino-acid sequence, 366 residues long: Lysophosphatidic acid receptor 1-B (366 aa).

At 1 to 52 the chain is on the extracellular side; sequence MTSLSEFVSEPIGMMSQTSAASESQCYYNETIAFFYNRSGKYLDTEWNAVSK. Disulfide bonds link cysteine 26/cysteine 192 and cysteine 190/cysteine 197. N-linked (GlcNAc...) asparagine glycans are attached at residues asparagine 29 and asparagine 37. Lysine 41 serves as a coordination point for a 1-acyl-sn-glycero-3-phosphate. A helical transmembrane segment spans residues 53–77; that stretch reads LVMGLGITVCIFIMLANLLVMVAIY. The Cytoplasmic portion of the chain corresponds to 78 to 85; that stretch reads VNRRFHFP. A helical transmembrane segment spans residues 86–109; the sequence is IYYLMANLAAADFFAGLAYFYLMF. The Extracellular portion of the chain corresponds to 110-123; the sequence is NTGPNTRRLTVSTW. The chain crosses the membrane as a helical span at residues 124–146; the sequence is LLRQGLIDTSLTASVANLLAIAI. Position 126-131 (126-131) interacts with a 1-acyl-sn-glycero-3-phosphate; it reads RQGLID. The Cytoplasmic segment spans residues 147–165; the sequence is ERHITVFRMQLHTRMSNRR. The chain crosses the membrane as a helical span at residues 166–186; the sequence is VVVVIVVIWTVAIVMGAIPSV. Residues 187 to 206 are Extracellular-facing; the sequence is GWNCICDLEHCSNMAPLYSD. The helical transmembrane segment at 207–227 threads the bilayer; that stretch reads SYLIFWTIFNLVTFVVMVVLY. Position 212 (tryptophan 212) interacts with a 1-acyl-sn-glycero-3-phosphate. Residues 228-257 are Cytoplasmic-facing; the sequence is AHIFVYVRQRTMRMSRHSSGPRRNRDTMMS. The helical transmembrane segment at 258-282 threads the bilayer; sequence LLKTVVIVLGAFIVCWTPGLVLLLL. Over 283 to 296 the chain is Extracellular; the sequence is DVCCPQCNILAYEK. Cysteine 286 and cysteine 289 form a disulfide bridge. Residues 297–317 form a helical membrane-spanning segment; that stretch reads FFLLLAEFNSAMNPIIYSYRD. Topologically, residues 318-366 are cytoplasmic; that stretch reads KEMSATFKQILCCQRTENVNGPTEGSDRSASSLNHTILAGVHSNDHSVV.

The protein belongs to the G-protein coupled receptor 1 family. Expressed at high levels in oocytes and at lower levels in brain and spinal cord. Below detection level in lung, heart, kidney, liver, muscle, stomach, and intestine.

The protein resides in the cell surface. The protein localises to the cell membrane. It is found in the endosome. Functionally, receptor for lysophosphatidic acid (LPA). Plays a role in the reorganization of the actin cytoskeleton, cell migration, differentiation and proliferation, and thereby contributes to the responses to tissue damage and infectious agents. Activates downstream signaling cascades via the G(i)/G(o), G(12)/G(13), and G(q) families of heteromeric G proteins. Signaling inhibits adenylyl cyclase activity and decreases cellular cAMP levels. Signaling triggers an increase of cytoplasmic Ca(2+) levels. Signaling leads to the activation of phospholipase C (PLC) and the formation of inositol 1,4,5-trisphosphate. Signaling mediates activation of down-stream MAP kinases. Contributes to the regulation of cell shape. Promotes Rho-dependent reorganization of the actin cytoskeleton in neuronal cells and neurite retraction. Promotes the activation of Rho and the formation of actin stress fibers. Promotes formation of lamellipodia at the leading edge of migrating cells via activation of Rac. Through its function as lysophosphatidic acid receptor, plays a role in chemotaxis and cell migration, including responses to injury and wounding. Promotes cell proliferation in response to lysophosphatidic acid. This Xenopus laevis (African clawed frog) protein is Lysophosphatidic acid receptor 1-B (lpar1-b).